The primary structure comprises 553 residues: Transcription factor IIIB 70 kDa subunit (553 aa).

The segment at 6 to 39 (KQQKCKTCGHTQFDVNRYTAAGDVSCLRCGTVLE) adopts a TFIIB-type zinc-finger fold. Zn(2+) is bound by residues Cys-10, Cys-13, Cys-31, and Cys-34. 2 repeat units span residues 98–174 (IAAA…KMVK) and 193–272 (FVEK…EFKK). The tract at residues 98–272 (IAAALKIPDY…LQRRLNEFKK (175 aa)) is interaction with TBP and with the Pol III subunit C34. The segment at 281–553 (KSFREVENLE…KGLLGGNMGF (273 aa)) is interaction with TBP. The disordered stretch occupies residues 473 to 523 (KQEADELTGNTSKSSSGNRRKRNKSSLPAELRKELGDIDLDEDGTPRSAAD). A compositionally biased stretch (low complexity) spans 480 to 489 (TGNTSKSSSG).

This sequence belongs to the TFIIB family. TFIIIB comprises the TATA-binding protein (TBP), the B-related factor (BRF) and a 70 kDa polypeptide.

It localises to the nucleus. Its function is as follows. General activator of RNA polymerase III transcription. Interacts with TBP. Binds to Pol III subunit C34 and to the TAU135 component of TFIIIC. The sequence is that of Transcription factor IIIB 70 kDa subunit (TDS4) from Candida albicans (strain SC5314 / ATCC MYA-2876) (Yeast).